A 209-amino-acid polypeptide reads, in one-letter code: MAVFKVLTPADIVAFSTGLIAGVDEVGRGPLVGDVVTAAVILDPNQPISGLNDSKKLSEKRREALFDEICEKALCYHIGRASPAEIDELNILHATMLAMQRAVAGLNLAPKLVLVDGNRSPFFSHNSQSIVSHSIIKGDGLIASISAASIIAKVTRDREMDALDAAYPQYGFAKHKGYPTKAHFEAIAEHGVFDQYRKSFKPVKALLEG.

In terms of domain architecture, RNase H type-2 spans 18–209 (GLIAGVDEVG…FKPVKALLEG (192 aa)). Residues aspartate 24, glutamate 25, and aspartate 116 each contribute to the a divalent metal cation site.

Belongs to the RNase HII family. The cofactor is Mn(2+). Mg(2+) is required as a cofactor.

It localises to the cytoplasm. The enzyme catalyses Endonucleolytic cleavage to 5'-phosphomonoester.. Functionally, endonuclease that specifically degrades the RNA of RNA-DNA hybrids. The chain is Ribonuclease HII from Shewanella putrefaciens (strain CN-32 / ATCC BAA-453).